A 578-amino-acid polypeptide reads, in one-letter code: MKLRNVEPRFLKAYNILMDKFGLFPFTYDMAEKVLKDNYENVNEVLSKLADAGLLEKTAKKEDKRKKIYKIKPLTTEKIEKVSKDKLIGLLKQGADLIRTQVDYKVLLLFLFFKAISDKYLLKVEELKKEFEDLDEEDIYVLANEEILELYDVEGKKLYVWHEVANNPEDFINALNKIVEMNKEKLSGLDELIKRTGLPTLFENENRHIVQHLINLFSRADFSEASYDILGDAYEWTLNYFAPTKAKEGEVYTPIEVSKLIAHLVEPKDDEVILDPACGSGSMLIEQYRFAGSNPNIVLVGQERNDVTAVLAKLNFILHGINLKDAKVFIGDSLLNPKFESFIXEVKGTGKADKVVANPPWNQDGYDENTLKVNEKYKDIYMYGFPNKNSADWAWVQLINYYTEKKAGIVLDSGALFRGGKEKTIRKRFVDDDLIEAVVLLPEKLFYNCPAPGIILILNKNKPEERKGKILFINASNEYIKHPEVKKLNKLSDENIEKIAKAYKEFKDVDGFCKVVDIEEIRKNDYNLNVSLYISPIEEDEDVDLGEVYEELNKLHNEYLEKFEVVKGYLEEINGLIK.

S-adenosyl-L-methionine contacts are provided by residues 250-255 (EVYTPI), 280-282 (SGS), glutamate 303, and 332-333 (DS).

Belongs to the N(4)/N(6)-methyltransferase family. As to quaternary structure, the type I restriction/modification system is composed of three polypeptides R, M and S.

The catalysed reaction is a 2'-deoxyadenosine in DNA + S-adenosyl-L-methionine = an N(6)-methyl-2'-deoxyadenosine in DNA + S-adenosyl-L-homocysteine + H(+). Functionally, the subtype gamma methyltransferase (M) subunit of a type I restriction enzyme. The M and S subunits together form a methyltransferase (MTase) that methylates A-2 on the top and A-3 on the bottom strand of the sequence 5'-GAYN(5)GTAA-3'. In the presence of the R subunit the complex can also act as an endonuclease, binding to the same target sequence but cutting the DNA some distance from this site. Whether the DNA is cut or modified depends on the methylation state of the target sequence. When the target site is unmodified, the DNA is cut. When the target site is hemimethylated, the complex acts as a maintenance MTase modifying the DNA so that both strands become methylated. After locating a non-methylated recognition site, the enzyme complex serves as a molecular motor that translocates DNA in an ATP-dependent manner until a collision occurs that triggers cleavage. This chain is Type I restriction enzyme MjaVIII methylase subunit, found in Methanocaldococcus jannaschii (strain ATCC 43067 / DSM 2661 / JAL-1 / JCM 10045 / NBRC 100440) (Methanococcus jannaschii).